The chain runs to 334 residues: Lipoyl synthase (334 aa).

Cys71, Cys76, Cys82, Cys97, Cys101, Cys104, and Ser312 together coordinate [4Fe-4S] cluster. Residues Trp83–Arg301 form the Radical SAM core domain.

It belongs to the radical SAM superfamily. Lipoyl synthase family. It depends on [4Fe-4S] cluster as a cofactor.

Its subcellular location is the cytoplasm. The enzyme catalyses [[Fe-S] cluster scaffold protein carrying a second [4Fe-4S](2+) cluster] + N(6)-octanoyl-L-lysyl-[protein] + 2 oxidized [2Fe-2S]-[ferredoxin] + 2 S-adenosyl-L-methionine + 4 H(+) = [[Fe-S] cluster scaffold protein] + N(6)-[(R)-dihydrolipoyl]-L-lysyl-[protein] + 4 Fe(3+) + 2 hydrogen sulfide + 2 5'-deoxyadenosine + 2 L-methionine + 2 reduced [2Fe-2S]-[ferredoxin]. It functions in the pathway protein modification; protein lipoylation via endogenous pathway; protein N(6)-(lipoyl)lysine from octanoyl-[acyl-carrier-protein]: step 2/2. In terms of biological role, catalyzes the radical-mediated insertion of two sulfur atoms into the C-6 and C-8 positions of the octanoyl moiety bound to the lipoyl domains of lipoate-dependent enzymes, thereby converting the octanoylated domains into lipoylated derivatives. This is Lipoyl synthase from Halorhodospira halophila (strain DSM 244 / SL1) (Ectothiorhodospira halophila (strain DSM 244 / SL1)).